The primary structure comprises 177 residues: MPLLPSPLGSLSAAATAAPRRAAAAAGLSPLLLRRRAPIAGALLFLSLGAFAGVRSLSSSASARMESTSTTVPSIVVYVTVPNKEAGKRLAGSIISEKLAACVNIVPGIESVYWWEGKVQTDAEELLIIKTRESLLDALTEHVKANHEYDVPEVIALPIKGGNLKYLEWLKNSTRES.

A chloroplast-targeting transit peptide spans 1-60 (MPLLPSPLGSLSAAATAAPRRAAAAAGLSPLLLRRRAPIAGALLFLSLGAFAGVRSLSSS).

The protein belongs to the CutA family. Homotrimer.

Its subcellular location is the plastid. It localises to the chloroplast. In Oryza sativa subsp. japonica (Rice), this protein is Protein CutA 1, chloroplastic (CUTA1).